Consider the following 521-residue polypeptide: MADNEKLDNQRLKNFKNKGRDLETMRRQRNEVVVELRKNKRDEHLLKRRNVPHEDICEDSDIDGDYRVQNTSLEAIVQNASSDNQGIQLSAVQAARKLLSSDRNPPIDDLIKSGILPILVHCLERDDNPSLQFEAAWALTNIASGTSEQTQAVVQSNAVPLFLRLLHSPHQNVCEQAVWALGNIIGDGPQCRDYVISLGVVKPLLSFISPSIPITFLRNVTWVMVNLCRHKDPPPPMETIQEILPALCVLIHHTDVNILVDTVWALSYLTDAGNEQIQMVIDSGIVPHLVPLLSHQEVKVQTAALRAVGNIVTGTDEQTQVVLNCDALSHFPALLTHPKEKINKEAVWFLSNITAGNQQQVQAVIDANLVPMIIHLLDKGDFGTQKEAAWAISNLTISGRKDQVAYLIQQNVIPPFCNLLTVKDAQVVQVVLDGLSNILKMAEDEAETIGNLIEECGGLEKIEQLQNHENEDIYKLAYEIIDQFFSSDDIDEDPSLVPEAIQGGTFGFNSSANVPTEGFQF.

Position 2 is an N-acetylalanine (Ala-2). The 57-residue stretch at 2 to 58 (ADNEKLDNQRLKNFKNKGRDLETMRRQRNEVVVELRKNKRDEHLLKRRNVPHEDICE) folds into the IBB domain. Positions 43-52 (EHLLKRRNVP) match the Nuclear localization signal motif. Residue Ser-60 is modified to Phosphoserine. The stretch at 66-106 (YRVQNTSLEAIVQNASSDNQGIQLSAVQAARKLLSSDRNPP) is one ARM 1; truncated repeat. 8 ARM repeats span residues 107–149 (IDDL…TSEQ), 150–194 (TQAV…CRDY), 195–233 (VISLGVVKPLLSFISPSIPITFLRNVTWVMVNLCRHKDP), 234–278 (PPPM…EQIQ), 279–318 (MVIDSGIVPHLVPLLSHQEVKVQTAALRAVGNIVTGTDEQ), 319–360 (TQVV…NQQQ), 361–400 (VQAVIDANLVPMIIHLLDKGDFGTQKEAAWAISNLTISGR), and 401–443 (KDQV…KMAE). The NLS binding site (major) stretch occupies residues 137–229 (WALTNIASGT…VTWVMVNLCR (93 aa)). The interval 306 to 394 (RAVGNIVTGT…QKEAAWAISN (89 aa)) is NLS binding site (minor). Residues 447–485 (ETIGNLIEECGGLEKIEQLQNHENEDIYKLAYEIIDQFF) form an ARM 10; atypical repeat.

This sequence belongs to the importin alpha family. As to quaternary structure, forms a complex with importin subunit beta-1 (KPNB1). Interacts with SNAI1. Interacts with TALDO1 isoform 1. Interacts with CYB1. In terms of assembly, (Microbial infection) Interacts with MERS virus protein OF4b; this interaction prevents the translocation of NF-kappa-B complex to the nucleus. (Microbial infection) Interacts with human adenovirus 5 E1A protein; this interaction allows E1A import into the host nucleus. As to quaternary structure, (Microbial infection) Interacts with Chikungunya virus capsid protein; this interaction allows the nuclear import of the viral capsid protein. Highly expressed in testis, ovary, small intestine, heart, skeletal muscle, lung and pancreas, but barely detectable in kidney, thymus, colon and peripheral blood leukocytes.

Its subcellular location is the cytoplasm. It localises to the nucleus. In terms of biological role, functions in nuclear protein import as an adapter protein for nuclear receptor KPNB1. Binds specifically and directly to substrates containing either a simple or bipartite NLS motif. Docking of the importin/substrate complex to the nuclear pore complex (NPC) is mediated by KPNB1 through binding to nucleoporin FxFG repeats and the complex is subsequently translocated through the pore by an energy requiring, Ran-dependent mechanism. At the nucleoplasmic side of the NPC, Ran binds to importin-beta and the three components separate and importin-alpha and -beta are re-exported from the nucleus to the cytoplasm where GTP hydrolysis releases Ran from importin. The directionality of nuclear import is thought to be conferred by an asymmetric distribution of the GTP- and GDP-bound forms of Ran between the cytoplasm and nucleus. Mediates nuclear import of AARS1, MRTFA and RANBP3. Its function is as follows. (Microbial infection) In vitro, mediates the nuclear import of human cytomegalovirus UL84 by recognizing a non-classical NLS. In vitro, mediates the nuclear import of human cytomegalovirus UL84 by recognizing a non-classical NLS. In Homo sapiens (Human), this protein is Importin subunit alpha-3.